We begin with the raw amino-acid sequence, 240 residues long: Uridylate kinase (240 aa).

12-15 (KLSG) serves as a coordination point for ATP. The segment at 20–25 (GKQGFG) is involved in allosteric activation by GTP. Gly-54 contributes to the UMP binding site. ATP is bound by residues Gly-55 and Arg-59. UMP contacts are provided by residues Asp-74 and 135 to 142 (TGNPYFST). Residues Asn-163, Tyr-169, and Asp-172 each coordinate ATP.

The protein belongs to the UMP kinase family. Homohexamer.

Its subcellular location is the cytoplasm. It carries out the reaction UMP + ATP = UDP + ADP. It participates in pyrimidine metabolism; CTP biosynthesis via de novo pathway; UDP from UMP (UMPK route): step 1/1. Its activity is regulated as follows. Allosterically activated by GTP. Inhibited by UTP. Functionally, catalyzes the reversible phosphorylation of UMP to UDP. The protein is Uridylate kinase of Geobacillus thermodenitrificans (strain NG80-2).